The sequence spans 208 residues: ATP phosphoribosyltransferase (208 aa).

This sequence belongs to the ATP phosphoribosyltransferase family. Short subfamily. Heteromultimer composed of HisG and HisZ subunits.

The protein localises to the cytoplasm. It carries out the reaction 1-(5-phospho-beta-D-ribosyl)-ATP + diphosphate = 5-phospho-alpha-D-ribose 1-diphosphate + ATP. It functions in the pathway amino-acid biosynthesis; L-histidine biosynthesis; L-histidine from 5-phospho-alpha-D-ribose 1-diphosphate: step 1/9. In terms of biological role, catalyzes the condensation of ATP and 5-phosphoribose 1-diphosphate to form N'-(5'-phosphoribosyl)-ATP (PR-ATP). Has a crucial role in the pathway because the rate of histidine biosynthesis seems to be controlled primarily by regulation of HisG enzymatic activity. This Thermotoga petrophila (strain ATCC BAA-488 / DSM 13995 / JCM 10881 / RKU-1) protein is ATP phosphoribosyltransferase.